The following is a 239-amino-acid chain: 1-(5-phosphoribosyl)-5-[(5-phosphoribosylamino)methylideneamino] imidazole-4-carboxamide isomerase (239 aa).

Asp-9 (proton acceptor) is an active-site residue. The Proton donor role is filled by Asp-131.

Belongs to the HisA/HisF family.

It localises to the cytoplasm. The catalysed reaction is 1-(5-phospho-beta-D-ribosyl)-5-[(5-phospho-beta-D-ribosylamino)methylideneamino]imidazole-4-carboxamide = 5-[(5-phospho-1-deoxy-D-ribulos-1-ylimino)methylamino]-1-(5-phospho-beta-D-ribosyl)imidazole-4-carboxamide. Its pathway is amino-acid biosynthesis; L-histidine biosynthesis; L-histidine from 5-phospho-alpha-D-ribose 1-diphosphate: step 4/9. In Parabacteroides distasonis (strain ATCC 8503 / DSM 20701 / CIP 104284 / JCM 5825 / NCTC 11152), this protein is 1-(5-phosphoribosyl)-5-[(5-phosphoribosylamino)methylideneamino] imidazole-4-carboxamide isomerase.